Consider the following 1509-residue polypeptide: ABC transporter G family member 38 (1509 aa).

The region spanning 196–467 is the ABC transporter 1 domain; it reads LGLVGLNFAK…FERCGFRCPE (272 aa). 229–236 provides a ligand contact to ATP; that stretch reads GPPSSGKT. The 214-residue stretch at 545-758 folds into the ABC transmembrane type-2 1 domain; the sequence is ELLKTSCSKE…AYIAFSSNEM (214 aa). 7 helical membrane passes run 563 to 583, 598 to 618, 651 to 671, 682 to 702, 707 to 727, 733 to 753, and 791 to 811; these read FVYIFKTVQGILVALIASTVF, IYIGALIFVMITNMFSGFADL, IPSSLFESIIWVAITYYTMGF, LLVVFMLQQMAAGLFRVTAGL, VVTNTAGSLAVLIMFVLGGFI, IPKWWVWAYWCSPLTYAYIAF, and YWIATGALLGFTILFNVLFSL. Residues 908-1160 enclose the ABC transporter 2 domain; that stretch reads MSFNEINYYV…KVVEYFEAIP (253 aa). 953 to 960 is a binding site for ATP; that stretch reads GVSGAGKT. Residues 1233–1447 form the ABC transmembrane type-2 2 domain; sequence NQFKLCLWKQ…TVYGLIVSQY (215 aa). Helical transmembrane passes span 1252–1272, 1284–1304, 1336–1356, 1367–1387, 1397–1417, 1425–1445, and 1478–1498; these read YNLVRIFFALFTALMLGTIFW, LLVIIGSMYAAVLFVGFENSV, VVVEIPYVFVETVIYTLIVYP, FFWFFYVSFFTFLYFTYYGMM, VASILGAAFYTLFNLFSGFFI, WWVWYYWLCPVAWTVYGLIVS, and FMGVVAAVLAGFTVFFAFTYA.

The protein belongs to the ABC transporter superfamily. ABCG family. PDR (TC 3.A.1.205) subfamily.

The protein localises to the membrane. In terms of biological role, may be a general defense protein. In Oryza sativa subsp. japonica (Rice), this protein is ABC transporter G family member 38.